The chain runs to 203 residues: Small ribosomal subunit protein uS4c (203 aa).

The S4 RNA-binding domain occupies 91-159; sequence MRLDNIIFRL…ISKNIEFYQK (69 aa).

It belongs to the universal ribosomal protein uS4 family. In terms of assembly, part of the 30S ribosomal subunit. Contacts protein S5. The interaction surface between S4 and S5 is involved in control of translational fidelity.

It localises to the plastid. It is found in the chloroplast. In terms of biological role, one of the primary rRNA binding proteins, it binds directly to 16S rRNA where it nucleates assembly of the body of the 30S subunit. With S5 and S12 plays an important role in translational accuracy. This is Small ribosomal subunit protein uS4c (rps4) from Lopidium concinnum (Moss).